The sequence spans 442 residues: Meiosis-specific with OB domain-containing protein (442 aa).

The OB DNA-binding region spans 167-272 (IINVLAAVKS…EANILLNFIR (106 aa)).

It belongs to the MEIOB family. As to quaternary structure, component of a multiprotein complex with RPA2 and SPATA22. Interacts with SPATA22. Interacts with the complex BRME1:HSF2BP:BRCA2. In terms of tissue distribution, in fetal gonads, specifically expressed in the ovary starting at the 14th weeks post fertilization. In the adult, restricted to testis.

It is found in the cytoplasm. It localises to the nucleus. The protein resides in the chromosome. Functionally, single-stranded DNA-binding protein required for homologous recombination in meiosis I. Required for double strand breaks (DSBs) repair and crossover formation and promotion of faithful and complete synapsis. Not required for the initial loading of recombinases but required to maintain a proper number of RAD51 and DMC1 foci after the zygotene stage. May act by ensuring the stabilization of recombinases, which is required for successful homology search and meiotic recombination. Displays Single-stranded DNA 3'-5' exonuclease activity in vitro. This chain is Meiosis-specific with OB domain-containing protein, found in Homo sapiens (Human).